The chain runs to 601 residues: Elongation factor 4 (601 aa).

In terms of domain architecture, tr-type G spans 5 to 187 (ENIRNFCIIA…AIVHHLPAPK (183 aa)). Residues 17 to 22 (DHGKST) and 134 to 137 (NKID) contribute to the GTP site.

It belongs to the TRAFAC class translation factor GTPase superfamily. Classic translation factor GTPase family. LepA subfamily.

It localises to the cell inner membrane. The catalysed reaction is GTP + H2O = GDP + phosphate + H(+). Its function is as follows. Required for accurate and efficient protein synthesis under certain stress conditions. May act as a fidelity factor of the translation reaction, by catalyzing a one-codon backward translocation of tRNAs on improperly translocated ribosomes. Back-translocation proceeds from a post-translocation (POST) complex to a pre-translocation (PRE) complex, thus giving elongation factor G a second chance to translocate the tRNAs correctly. Binds to ribosomes in a GTP-dependent manner. The polypeptide is Elongation factor 4 (Desulfovibrio desulfuricans (strain ATCC 27774 / DSM 6949 / MB)).